Reading from the N-terminus, the 156-residue chain is Ribosomal RNA large subunit methyltransferase H (156 aa).

S-adenosyl-L-methionine is bound by residues Leu-73, Gly-104, and 123–128 (VSSLTL).

This sequence belongs to the RNA methyltransferase RlmH family. Homodimer.

It localises to the cytoplasm. The enzyme catalyses pseudouridine(1915) in 23S rRNA + S-adenosyl-L-methionine = N(3)-methylpseudouridine(1915) in 23S rRNA + S-adenosyl-L-homocysteine + H(+). Its function is as follows. Specifically methylates the pseudouridine at position 1915 (m3Psi1915) in 23S rRNA. This is Ribosomal RNA large subunit methyltransferase H from Paraburkholderia phytofirmans (strain DSM 17436 / LMG 22146 / PsJN) (Burkholderia phytofirmans).